Consider the following 103-residue polypeptide: Histone H4 (103 aa).

Positions 1-14 (MSGRGKGGKGLGKG) are enriched in gly residues. A disordered region spans residues 1–20 (MSGRGKGGKGLGKGGAKRHR). N6-(2-hydroxyisobutyryl)lysine; alternate occurs at positions 6, 9, 13, 17, 32, and 45. Lys-6 carries the post-translational modification N6-acetyl-N6-methyllysine; alternate. Residues Lys-6, Lys-9, Lys-13, Lys-17, Lys-32, and Lys-45 each carry the N6-butyryllysine; alternate modification. Lys-6 carries the post-translational modification N6-glutaryllysine; alternate. The residue at position 9 (Lys-9) is an N6-propionyllysine; alternate. At Lys-13 the chain carries N6-acetyl-N6-methyllysine; alternate. N6-glutaryllysine; alternate is present on Lys-13. Lys-17, Lys-32, and Lys-45 each carry N6-propionyllysine; alternate. Residues 17–21 (KRHRK) mediate DNA binding. Lys-32 carries the N6-glutaryllysine; alternate modification. The residue at position 32 (Lys-32) is an N6-succinyllysine; alternate. Lys-60, Lys-78, Lys-80, and Lys-92 each carry N6-glutaryllysine; alternate. Residue Lys-60 is modified to N6-(2-hydroxyisobutyryl)lysine. Lys-78, Lys-80, and Lys-92 each carry N6-(2-hydroxyisobutyryl)lysine; alternate. N6-butyryllysine; alternate is present on residues Lys-78, Lys-80, and Lys-92. N6-propionyllysine; alternate occurs at positions 78, 80, and 92. Position 78 is an N6-succinyllysine (Lys-78). N6-succinyllysine; alternate is present on Lys-92.

The protein belongs to the histone H4 family. As to quaternary structure, the nucleosome is a histone octamer containing two molecules each of H2A, H2B, H3 and H4 assembled in one H3-H4 heterotetramer and two H2A-H2B heterodimers. The octamer wraps approximately 147 bp of DNA. Butyrylation of histones marks active promoters and competes with histone acetylation. In terms of processing, glutarylation at Lys-92 (H4K91glu) destabilizes nucleosomes by promoting dissociation of the H2A-H2B dimers from nucleosomes.

The protein localises to the nucleus. Its subcellular location is the chromosome. In terms of biological role, core component of nucleosome. Nucleosomes wrap and compact DNA into chromatin, limiting DNA accessibility to the cellular machineries which require DNA as a template. Histones thereby play a central role in transcription regulation, DNA repair, DNA replication and chromosomal stability. DNA accessibility is regulated via a complex set of post-translational modifications of histones, also called histone code, and nucleosome remodeling. The sequence is that of Histone H4 (H4.1) from Oikopleura dioica (Tunicate).